We begin with the raw amino-acid sequence, 149 residues long: Ribosome maturation factor RimP (149 aa).

It belongs to the RimP family.

The protein resides in the cytoplasm. In terms of biological role, required for maturation of 30S ribosomal subunits. This is Ribosome maturation factor RimP from Neisseria meningitidis serogroup A / serotype 4A (strain DSM 15465 / Z2491).